The sequence spans 134 residues: Ribonuclease P protein component (134 aa).

This sequence belongs to the RnpA family. As to quaternary structure, consists of a catalytic RNA component (M1 or rnpB) and a protein subunit.

The catalysed reaction is Endonucleolytic cleavage of RNA, removing 5'-extranucleotides from tRNA precursor.. Its function is as follows. RNaseP catalyzes the removal of the 5'-leader sequence from pre-tRNA to produce the mature 5'-terminus. It can also cleave other RNA substrates such as 4.5S RNA. The protein component plays an auxiliary but essential role in vivo by binding to the 5'-leader sequence and broadening the substrate specificity of the ribozyme. This chain is Ribonuclease P protein component, found in Pseudomonas putida (strain ATCC 700007 / DSM 6899 / JCM 31910 / BCRC 17059 / LMG 24140 / F1).